Reading from the N-terminus, the 393-residue chain is uncharacterized protein (393 aa).

Positions 2 to 266 constitute an OBG-type G domain; it reads AMIGLVGKPN…AEKAGIIKRK (265 aa). GTP contacts are provided by residues 8–15 and 78–82; these read GKPNVGKS and DVAGL. One can recognise a TGS domain in the interval 314–390; the sequence is DMIVVYPVED…KHNDIIKIVS (77 aa).

The protein belongs to the TRAFAC class OBG-HflX-like GTPase superfamily. OBG GTPase family.

This is an uncharacterized protein from Methanocaldococcus jannaschii (strain ATCC 43067 / DSM 2661 / JAL-1 / JCM 10045 / NBRC 100440) (Methanococcus jannaschii).